The sequence spans 251 residues: Small ribosomal subunit protein uS2 (251 aa).

Belongs to the universal ribosomal protein uS2 family.

The sequence is that of Small ribosomal subunit protein uS2 from Synechococcus sp. (strain ATCC 27144 / PCC 6301 / SAUG 1402/1) (Anacystis nidulans).